Here is a 473-residue protein sequence, read N- to C-terminus: Siroheme synthase (473 aa).

A precorrin-2 dehydrogenase /sirohydrochlorin ferrochelatase region spans residues 1-203 (MTLFPIFADL…QQPGLAEQEL (203 aa)). Residues 22-23 (AV) and 43-44 (PR) each bind NAD(+). Ser128 carries the post-translational modification Phosphoserine. The uroporphyrinogen-III C-methyltransferase stretch occupies residues 216 to 473 (GSVVLVGAGP…GLPGPQALAA (258 aa)). S-adenosyl-L-methionine is bound at residue Pro225. Residue Asp248 is the Proton acceptor of the active site. The active-site Proton donor is Lys270. Residues 302 to 304 (GGD), Ile307, 332 to 333 (TA), Met384, and Gly413 contribute to the S-adenosyl-L-methionine site.

The protein in the N-terminal section; belongs to the precorrin-2 dehydrogenase / sirohydrochlorin ferrochelatase family. It in the C-terminal section; belongs to the precorrin methyltransferase family.

The enzyme catalyses uroporphyrinogen III + 2 S-adenosyl-L-methionine = precorrin-2 + 2 S-adenosyl-L-homocysteine + H(+). It catalyses the reaction precorrin-2 + NAD(+) = sirohydrochlorin + NADH + 2 H(+). The catalysed reaction is siroheme + 2 H(+) = sirohydrochlorin + Fe(2+). Its pathway is cofactor biosynthesis; adenosylcobalamin biosynthesis; precorrin-2 from uroporphyrinogen III: step 1/1. It functions in the pathway cofactor biosynthesis; adenosylcobalamin biosynthesis; sirohydrochlorin from precorrin-2: step 1/1. The protein operates within porphyrin-containing compound metabolism; siroheme biosynthesis; precorrin-2 from uroporphyrinogen III: step 1/1. It participates in porphyrin-containing compound metabolism; siroheme biosynthesis; siroheme from sirohydrochlorin: step 1/1. Its pathway is porphyrin-containing compound metabolism; siroheme biosynthesis; sirohydrochlorin from precorrin-2: step 1/1. Its function is as follows. Multifunctional enzyme that catalyzes the SAM-dependent methylations of uroporphyrinogen III at position C-2 and C-7 to form precorrin-2 via precorrin-1. Then it catalyzes the NAD-dependent ring dehydrogenation of precorrin-2 to yield sirohydrochlorin. Finally, it catalyzes the ferrochelation of sirohydrochlorin to yield siroheme. This chain is Siroheme synthase, found in Bordetella parapertussis (strain 12822 / ATCC BAA-587 / NCTC 13253).